A 346-amino-acid polypeptide reads, in one-letter code: 4-hydroxy-2-oxovalerate aldolase (346 aa).

A Pyruvate carboxyltransferase domain is found at 8 to 260; the sequence is VILHDMSLRD…ETGIDLYKIM (253 aa). Position 16–17 (16–17) interacts with substrate; the sequence is RD. A Mn(2+)-binding site is contributed by Asp17. Residue His20 is the Proton acceptor of the active site. Substrate is bound by residues Ser170 and His199. The Mn(2+) site is built by His199 and His201. Residue Tyr290 coordinates substrate.

This sequence belongs to the 4-hydroxy-2-oxovalerate aldolase family.

The catalysed reaction is (S)-4-hydroxy-2-oxopentanoate = acetaldehyde + pyruvate. It functions in the pathway aromatic compound metabolism; naphthalene degradation. The polypeptide is 4-hydroxy-2-oxovalerate aldolase (nahM) (Pseudomonas putida (Arthrobacter siderocapsulatus)).